A 366-amino-acid polypeptide reads, in one-letter code: Ferredoxin--NADP reductase (366 aa).

Asp-51, Gln-59, Tyr-64, Val-104, Phe-139, Asp-308, and Thr-349 together coordinate FAD.

The protein belongs to the ferredoxin--NADP reductase type 2 family. As to quaternary structure, homodimer. The cofactor is FAD.

The catalysed reaction is 2 reduced [2Fe-2S]-[ferredoxin] + NADP(+) + H(+) = 2 oxidized [2Fe-2S]-[ferredoxin] + NADPH. The sequence is that of Ferredoxin--NADP reductase from Polaromonas sp. (strain JS666 / ATCC BAA-500).